A 562-amino-acid polypeptide reads, in one-letter code: Arginine--tRNA ligase (562 aa).

A 'HIGH' region motif is present at residues 122–132 (PNIAKPISMGH).

The protein belongs to the class-I aminoacyl-tRNA synthetase family. As to quaternary structure, monomer.

The protein resides in the cytoplasm. It carries out the reaction tRNA(Arg) + L-arginine + ATP = L-arginyl-tRNA(Arg) + AMP + diphosphate. This chain is Arginine--tRNA ligase, found in Pediococcus pentosaceus (strain ATCC 25745 / CCUG 21536 / LMG 10740 / 183-1w).